The sequence spans 1070 residues: Isoleucine--tRNA ligase (1070 aa).

A 'HIGH' region motif is present at residues 50-60 (PYTSGAAHMGT). A 'KMSKS' region motif is present at residues 606 to 610 (GMSKS). ATP is bound at residue lysine 609.

Belongs to the class-I aminoacyl-tRNA synthetase family. IleS type 2 subfamily. As to quaternary structure, monomer. Zn(2+) serves as cofactor.

It is found in the cytoplasm. The enzyme catalyses tRNA(Ile) + L-isoleucine + ATP = L-isoleucyl-tRNA(Ile) + AMP + diphosphate. In terms of biological role, catalyzes the attachment of isoleucine to tRNA(Ile). As IleRS can inadvertently accommodate and process structurally similar amino acids such as valine, to avoid such errors it has two additional distinct tRNA(Ile)-dependent editing activities. One activity is designated as 'pretransfer' editing and involves the hydrolysis of activated Val-AMP. The other activity is designated 'posttransfer' editing and involves deacylation of mischarged Val-tRNA(Ile). This is Isoleucine--tRNA ligase from Halobacterium salinarum (strain ATCC 700922 / JCM 11081 / NRC-1) (Halobacterium halobium).